Consider the following 321-residue polypeptide: Probable endolytic peptidoglycan transglycosylase RlpA (321 aa).

It belongs to the RlpA family.

Functionally, lytic transglycosylase with a strong preference for naked glycan strands that lack stem peptides. This chain is Probable endolytic peptidoglycan transglycosylase RlpA, found in Synechocystis sp. (strain ATCC 27184 / PCC 6803 / Kazusa).